A 345-amino-acid chain; its full sequence is Beta-2-glycoprotein 1 (345 aa).

An N-terminal signal peptide occupies residues 1–19 (MVSPVLALFSAFLCHVAIA). Sushi domains follow at residues 21–81 (RICP…RCVP), 82–139 (RVCP…ACAR), 140–202 (ITCP…ECLE), and 203–262 (VKCP…TCRE). 11 cysteine pairs are disulfide-bonded: C23/C66, C51/C79, C84/C124, C110/C137, C142/C188, C174/C200, C205/C248, C234/C260, C264/C315, C300/C325, and C307/C345. T33 carries an O-linked (GalNAc...) threonine glycan. N105, N117, N162, N183, and N193 each carry an N-linked (GlcNAc...) asparagine glycan. Residues 263-345 (SCKLPVKKAT…KTDASELTPC (83 aa)) are sushi-like.

As to expression, expressed by the liver and secreted in plasma.

Its subcellular location is the secreted. Its function is as follows. Binds to various kinds of negatively charged substances such as heparin, phospholipids, and dextran sulfate. May prevent activation of the intrinsic blood coagulation cascade by binding to phospholipids on the surface of damaged cells. The sequence is that of Beta-2-glycoprotein 1 (Apoh) from Mus musculus (Mouse).